The chain runs to 196 residues: MQERIKACFTESIQTQIAAAEALPDAISRAAMTLVQSLLNGNKILCCGNGTSAANAQHFAASMINRFETERPSLPAIALNTDNVVLTAIANDRLHDEVYAKQVRALGHAGDVLLAISTRGNSRDIVKAVEAAVTRDMTIVALTGYDGGELAGLLGPQDVEIRIPSHRSARIQEMHMLTVNCLCDLIDNTLFPHQDD.

An SIS domain is found at 34–196 (LVQSLLNGNK…DNTLFPHQDD (163 aa)).

Belongs to the SIS family. DiaA subfamily. In terms of assembly, homotetramer; dimer of dimers.

Its function is as follows. Required for the timely initiation of chromosomal replication via direct interactions with the DnaA initiator protein. The chain is DnaA initiator-associating protein DiaA from Shigella boydii serotype 18 (strain CDC 3083-94 / BS512).